The primary structure comprises 354 residues: L-Lys-D/L-Arg epimerase (354 aa).

Substrate-binding positions include T135 and 160-162 (KIK). Mg(2+)-binding residues include D190, E215, and D240. Substrate is bound by residues K265, D295, and 318–320 (DLD).

The protein belongs to the mandelate racemase/muconate lactonizing enzyme family. It depends on Mg(2+) as a cofactor.

Its function is as follows. Catalyzes the epimerization of L-Lys-L-Arg to L-Lys-D-Arg (in vitro). Catalyzes the epimerization of positively charged dipeptides, with a preference for substrates with a basic amino acid in the second position. Has epimerase activity with L-Lys-L-Lys, L-Arg-L-Arg, L-Val-L-Arg, L-Val-L-Lys and L-Ala-L-Arg (in vitro). In Desulforapulum autotrophicum (strain ATCC 43914 / DSM 3382 / VKM B-1955 / HRM2) (Desulfobacterium autotrophicum), this protein is L-Lys-D/L-Arg epimerase.